The following is a 213-amino-acid chain: Pyridoxine/pyridoxamine 5'-phosphate oxidase (213 aa).

Residues Arg-60 to Lys-65, Tyr-75 to Ser-76, Lys-82, and Gln-104 contribute to the FMN site. Position 65 (Lys-65) interacts with substrate. 2 residues coordinate substrate: Tyr-122 and Arg-126. FMN is bound by residues Gln-139 to Ser-140 and Trp-184. Arg-190–His-192 is a substrate binding site. Position 194 (Arg-194) interacts with FMN.

Belongs to the pyridoxamine 5'-phosphate oxidase family. In terms of assembly, homodimer. FMN is required as a cofactor.

The enzyme catalyses pyridoxamine 5'-phosphate + O2 + H2O = pyridoxal 5'-phosphate + H2O2 + NH4(+). The catalysed reaction is pyridoxine 5'-phosphate + O2 = pyridoxal 5'-phosphate + H2O2. Its pathway is cofactor metabolism; pyridoxal 5'-phosphate salvage; pyridoxal 5'-phosphate from pyridoxamine 5'-phosphate: step 1/1. The protein operates within cofactor metabolism; pyridoxal 5'-phosphate salvage; pyridoxal 5'-phosphate from pyridoxine 5'-phosphate: step 1/1. Functionally, catalyzes the oxidation of either pyridoxine 5'-phosphate (PNP) or pyridoxamine 5'-phosphate (PMP) into pyridoxal 5'-phosphate (PLP). The protein is Pyridoxine/pyridoxamine 5'-phosphate oxidase of Nitrobacter winogradskyi (strain ATCC 25391 / DSM 10237 / CIP 104748 / NCIMB 11846 / Nb-255).